The primary structure comprises 333 residues: 5-formaminoimidazole-4-carboxamide-1-(beta)-D-ribofuranosyl 5'-monophosphate synthetase (333 aa).

2 residues coordinate 5-amino-1-(5-phospho-beta-D-ribosyl)imidazole-4-carboxamide: His21 and Ser84. The 196-residue stretch at 118-313 (MELLAAAGIP…YFDEPMDMGE (196 aa)) folds into the ATP-grasp domain. Residues 141–187 (PVIV…VPAY) and Glu209 contribute to the ATP site. Asn229 lines the 5-amino-1-(5-phospho-beta-D-ribosyl)imidazole-4-carboxamide pocket. Mg(2+) contacts are provided by Glu268 and Glu281.

It belongs to the phosphohexose mutase family. It depends on Mg(2+) as a cofactor. Mn(2+) is required as a cofactor.

It carries out the reaction 5-amino-1-(5-phospho-beta-D-ribosyl)imidazole-4-carboxamide + formate + ATP = 5-formamido-1-(5-phospho-D-ribosyl)imidazole-4-carboxamide + ADP + phosphate. It functions in the pathway purine metabolism; IMP biosynthesis via de novo pathway; 5-formamido-1-(5-phospho-D-ribosyl)imidazole-4-carboxamide from 5-amino-1-(5-phospho-D-ribosyl)imidazole-4-carboxamide (formate route): step 1/1. Catalyzes the ATP- and formate-dependent formylation of 5-aminoimidazole-4-carboxamide-1-beta-d-ribofuranosyl 5'-monophosphate (AICAR) to 5-formaminoimidazole-4-carboxamide-1-beta-d-ribofuranosyl 5'-monophosphate (FAICAR) in the absence of folates. The sequence is that of 5-formaminoimidazole-4-carboxamide-1-(beta)-D-ribofuranosyl 5'-monophosphate synthetase from Pyrobaculum calidifontis (strain DSM 21063 / JCM 11548 / VA1).